Reading from the N-terminus, the 784-residue chain is Toll-like receptor 2 (784 aa).

The signal sequence occupies residues 1-20 (MPRALWTAWVWAVIILSTEG). At 21-587 (ASDQASSLSC…ARLSLSECHR (567 aa)) the chain is on the extracellular side. Cysteine 30 and cysteine 36 are joined by a disulfide. 19 LRR repeats span residues 54 to 77 (VKSL…RCVN), 78 to 101 (LKTL…HLRN), 102 to 125 (LEYL…SLYV), 126 to 150 (LKFL…HLPN), 151 to 175 (LRTL…GLTF), 176 to 199 (LEEL…SIQN), 200 to 223 (ISHL…IVSS), 224 to 250 (LDCF…MSTS), 251 to 278 (VKKL…YVSG), 279 to 308 (ILEV…HLGN), 309 to 337 (VETL…LTGR), 338 to 361 (VKRV…HLKS), 362 to 388 (LEYL…AWPF), 389 to 414 (LQTL…TLEN), 415 to 437 (LNNL…WPGK), 438 to 457 (MKQL…CLPQ), 458 to 478 (TLEI…ILPQ), 479 to 500 (LKEL…FLPV), and 501 to 524 (LSVM…SFQQ). An N-linked (GlcNAc...) asparagine glycan is attached at asparagine 114. Residue asparagine 199 is glycosylated (N-linked (GlcNAc...) asparagine). Cysteines 353 and 382 form a disulfide. A disulfide bridge links cysteine 432 with cysteine 454. N-linked (GlcNAc...) asparagine glycosylation is present at asparagine 442. Residues 525–579 (LKTLEAGGNNFICSCDFLSFTQGQQALGRVLVDWPDDYRCDSPSHVRGQRVQDAR) enclose the LRRCT domain. A helical membrane pass occupies residues 588-608 (AAVVSAACCALFLLLLLTGVL). Over 609 to 784 (CHRFHGLWYM…WLNLRAAIRS (176 aa)) the chain is Cytoplasmic. The 144-residue stretch at 639 to 782 (ICYDAFVSYS…GFWLNLRAAI (144 aa)) folds into the TIR domain. A Glycyl lysine isopeptide (Lys-Gly) (interchain with G-Cter in ubiquitin) cross-link involves residue lysine 754. The ATG16L1-binding motif motif lies at 761–778 (YLEWPVDETQQEGFWLNL).

Belongs to the Toll-like receptor family. As to quaternary structure, interacts with LY96, TLR1 and TLR6 (via extracellular domain). TLR2 seems to exist in heterodimers with either TLR1 or TLR6 before stimulation by the ligand. The heterodimers form bigger oligomers in response to their corresponding ligands as well as further heterotypic associations with other receptors such as CD14 and/or CD36. Binds MYD88 (via TIR domain). Interacts with TICAM1. Interacts with CNPY3. Interacts with ATG16L1. Interacts with PPP1R11. Interacts with TICAM2. Interacts with TIRAP. Post-translationally, ubiquitinated at Lys-754 by PPP1R11, leading to its degradation. Deubiquitinated by USP2. In terms of processing, glycosylation of Asn-442 is critical for secretion of the N-terminal ectodomain of TLR2.

The protein localises to the membrane. Its subcellular location is the cytoplasmic vesicle. It localises to the phagosome membrane. It is found in the membrane raft. In terms of biological role, cooperates with LY96 to mediate the innate immune response to bacterial lipoproteins and other microbial cell wall components. Cooperates with TLR1 or TLR6 to mediate the innate immune response to bacterial lipoproteins or lipopeptides. Acts via MYD88 and TRAF6, leading to NF-kappa-B activation, cytokine secretion and the inflammatory response. May also promote apoptosis in response to lipoproteins. Forms activation clusters composed of several receptors depending on the ligand, these clusters trigger signaling from the cell surface and subsequently are targeted to the Golgi in a lipid-raft dependent pathway. Forms the cluster TLR2:TLR6:CD14:CD36 in response to diacylated lipopeptides and TLR2:TLR1:CD14 in response to triacylated lipopeptides. This is Toll-like receptor 2 (TLR2) from Bos taurus (Bovine).